We begin with the raw amino-acid sequence, 381 residues long: Chaperone protein DnaJ (381 aa).

Residues 5–69 (DYYEVLGVSK…EKRARYDRFG (65 aa)) enclose the J domain. The segment at 136 to 218 (GKETEIEVPH…CGGTGHVKKR (83 aa)) adopts a CR-type zinc-finger fold. Positions 149, 152, 166, 169, 192, 195, 206, and 209 each coordinate Zn(2+). CXXCXGXG motif repeat units follow at residues 149–156 (CDTCHGSG), 166–173 (CPHCHGSG), 192–199 (CPVCGGTG), and 206–213 (CPTCGGTG). The disordered stretch occupies residues 154–174 (GSGAKPGTSPQSCPHCHGSGQ).

Belongs to the DnaJ family. Homodimer. Zn(2+) serves as cofactor.

The protein localises to the cytoplasm. Functionally, participates actively in the response to hyperosmotic and heat shock by preventing the aggregation of stress-denatured proteins and by disaggregating proteins, also in an autonomous, DnaK-independent fashion. Unfolded proteins bind initially to DnaJ; upon interaction with the DnaJ-bound protein, DnaK hydrolyzes its bound ATP, resulting in the formation of a stable complex. GrpE releases ADP from DnaK; ATP binding to DnaK triggers the release of the substrate protein, thus completing the reaction cycle. Several rounds of ATP-dependent interactions between DnaJ, DnaK and GrpE are required for fully efficient folding. Also involved, together with DnaK and GrpE, in the DNA replication of plasmids through activation of initiation proteins. This Geobacillus thermodenitrificans (strain NG80-2) protein is Chaperone protein DnaJ.